A 359-amino-acid chain; its full sequence is Peptide chain release factor 1 (359 aa).

Gln-234 is modified (N5-methylglutamine). The segment at 283–305 is disordered; sequence SQKDAARAADRRAQVGSGDRSER.

The protein belongs to the prokaryotic/mitochondrial release factor family. Post-translationally, methylated by PrmC. Methylation increases the termination efficiency of RF1.

It localises to the cytoplasm. In terms of biological role, peptide chain release factor 1 directs the termination of translation in response to the peptide chain termination codons UAG and UAA. This Methylobacterium nodulans (strain LMG 21967 / CNCM I-2342 / ORS 2060) protein is Peptide chain release factor 1.